Reading from the N-terminus, the 291-residue chain is Ribosomal RNA small subunit methyltransferase H (291 aa).

Residues 31–33 (GGY), Asp49, Phe76, Asp97, and Gln104 each bind S-adenosyl-L-methionine.

The protein belongs to the methyltransferase superfamily. RsmH family.

It localises to the cytoplasm. It catalyses the reaction cytidine(1402) in 16S rRNA + S-adenosyl-L-methionine = N(4)-methylcytidine(1402) in 16S rRNA + S-adenosyl-L-homocysteine + H(+). Functionally, specifically methylates the N4 position of cytidine in position 1402 (C1402) of 16S rRNA. The sequence is that of Ribosomal RNA small subunit methyltransferase H from Anaplasma marginale (strain Florida).